Consider the following 435-residue polypeptide: Putative F-box/FBD/LRR-repeat protein At5g56810 (435 aa).

Residues 14 to 62 form the F-box domain; it reads PDRISQLPNDLLFRILSLIPVSDAMSTSLLSKRWKSVWKMLPTLVYNEN. LRR repeat units lie at residues 64-95, 146-173, 174-199, 222-248, 266-291, and 316-341; these read CSNI…TLEL, LKLQ…YLTC, VNFE…FLQR, KEQA…NIFD, SVRV…SLDL, and YDNF…KLNH. In terms of domain architecture, FBD spans 353–404; sequence CSVSEPSSVPECLSFHLETFQWIGYAGTFEEIAAAVYVLKNARCLKNATISL.

In Arabidopsis thaliana (Mouse-ear cress), this protein is Putative F-box/FBD/LRR-repeat protein At5g56810.